A 357-amino-acid polypeptide reads, in one-letter code: Elongation factor Ts (357 aa).

The segment at 82–85 (TDFV) is involved in Mg(2+) ion dislocation from EF-Tu.

Belongs to the EF-Ts family.

It localises to the cytoplasm. In terms of biological role, associates with the EF-Tu.GDP complex and induces the exchange of GDP to GTP. It remains bound to the aminoacyl-tRNA.EF-Tu.GTP complex up to the GTP hydrolysis stage on the ribosome. The sequence is that of Elongation factor Ts from Campylobacter jejuni subsp. jejuni serotype O:23/36 (strain 81-176).